We begin with the raw amino-acid sequence, 659 residues long: MSAVPELRITLAGTERVVAAGTTAGQALEADGRTVIAALVNGEPRDLTHELADGDVVEEIRIDSEEGRAILRHSCAHVLAQAVQELFPEAKLGIGPPIENGFYYDFDVAEPFTPDDLKRIEKRMQEIIKQGQRFSRRAVTDEDARAELADEPYKLELIELKGGAAEAAEGAGVEVGAGQLTIYDNLHPRTGEVCWKDLCRGPHLPDTRAIPAFKLMRTAAAYWRGSEKNPQLQRIYGTAWETKDALKSYLTMLEEAAKRDHRKLGVELDLFSFPDELGSGLAVFHPKGGVVRKVMEEYSRRRHEEAGYQFVNTPHISKAGLFETSGHLPNYADAMFPPIQFEGADYYLKAMNCPMHNLIYRSRGRSYRELPLRLFEFGTVYRYEKSGVVHGLTRARGFTQDDAHIYCTKEQMPDELDRLLTFVLDLLRDYGLSDFYLELSTRDDSPKFIGEPQEWEEATEILRQAAQKQNLELVMDAGGAAYYGPKISVQAKDAIGRTWQMSTIQVDFQQPKRFELEYQAADGSRQRPVMIHRALFGSIERFFAVLLEHYAGAFPAWLAPVQVVGIPIASEHVPYLEDVARRLREHGVRVEVDASDDRMQKKIRNAQKQKIPFMLLAGDNDVSKGAVSFRYRDGSQNNGVPIDKAIEEILTVIRERRQV.

Residues 1 to 61 (MSAVPELRIT…ADGDVVEEIR (61 aa)) enclose the TGS domain. Residues 260–555 (DHRKLGVELD…LLEHYAGAFP (296 aa)) form a catalytic region. Positions 353, 404, and 532 each coordinate Zn(2+).

It belongs to the class-II aminoacyl-tRNA synthetase family. As to quaternary structure, homodimer. The cofactor is Zn(2+).

The protein resides in the cytoplasm. It carries out the reaction tRNA(Thr) + L-threonine + ATP = L-threonyl-tRNA(Thr) + AMP + diphosphate + H(+). Functionally, catalyzes the attachment of threonine to tRNA(Thr) in a two-step reaction: L-threonine is first activated by ATP to form Thr-AMP and then transferred to the acceptor end of tRNA(Thr). Also edits incorrectly charged L-seryl-tRNA(Thr). The chain is Threonine--tRNA ligase from Thermobifida fusca (strain YX).